The primary structure comprises 595 residues: Estrogen receptor (595 aa).

Residues 1–184 (MTMTLHTKAS…AMESAKETRY (184 aa)) are modulating (transactivation AF-1); mediates interaction with MACROD1. S10 carries O-linked (GlcNAc) serine glycosylation. Residues 35-47 (LERPLGEVYVDSS) are required for interaction with NCOA1. The interaction with DDX5; self-association stretch occupies residues 35–174 (LERPLGEVYV…LASTSDKGSM (140 aa)). Phosphoserine; by CDK2 occurs at positions 104 and 106. S118 bears the Phosphoserine mark. The tract at residues 144–174 (AGPPAFYRPNSDNRRQGGRERLASTSDKGSM) is disordered. Residues 154-165 (SDNRRQGGRERL) show a composition bias toward basic and acidic residues. The residue at position 167 (S167) is a Phosphoserine; by CK2. 2 NR C4-type zinc fingers span residues 185 to 205 (CAVCNDYASGYHYGVWSCEGC) and 221 to 245 (CPATNQCTIDKNRRKSCQACRLRKC). A DNA-binding region (nuclear receptor) is located at residues 185-250 (CAVCNDYASG…RLRKCYEVGM (66 aa)). Residues 185 to 310 (CAVCNDYASG…TKKNSPVLSL (126 aa)) form a mediates interaction with DNTTIP2 region. The hinge stretch occupies residues 251 to 310 (MKGGIRKDRRGGRMLKHKRQRDDGEGRNEAVPPGDMRSANLWPSPLLIKHTKKNSPVLSL). Residues 257–269 (KDRRGGRMLKHKR) show a composition bias toward basic residues. The tract at residues 257–288 (KDRRGGRMLKHKRQRDDGEGRNEAVPPGDMRS) is disordered. The residue at position 260 (R260) is an Asymmetric dimethylarginine; by PRMT1. Positions 262 to 595 (GRMLKHKRQR…GEAENFPTTI (334 aa)) are interaction with AKAP13. Residues 264–594 (MLKHKRQRDD…TGEAENFPTT (331 aa)) are self-association. Residues 311–547 (TADQMISALL…DLLLEMLDAH (237 aa)) enclose the NR LBD domain. Positions 311-594 (TADQMISALL…TGEAENFPTT (284 aa)) are transactivation AF-2. Positions 353 and 394 each coordinate 17beta-estradiol. A lipid anchor (S-palmitoyl cysteine) is attached at C447. A 17beta-estradiol-binding site is contributed by H524. Y537 carries the post-translational modification Phosphotyrosine; by Tyr-kinases. Residues 551–575 (APTNLGGPPPEDMSQSQLATSGSTP) form a disordered region. Polar residues predominate over residues 563 to 575 (MSQSQLATSGSTP).

Belongs to the nuclear hormone receptor family. NR3 subfamily. Binds DNA as a homodimer. Can form a heterodimer with ESR2. Interacts with coactivator NCOA5. Interacts with PELP1, the interaction is enhanced by 17-beta-estradiol; the interaction increases ESR1 transcriptional activity. Interacts with NCOA7; the interaction is ligand-inducible. Interacts with AKAP13, CUEDC2, HEXIM1, KDM5A, MAP1S, SMARD1, and UBE1C. Interacts with MUC1; the interaction is stimulated by 7 beta-estradiol (E2) and enhances ESR1-mediated transcription. Interacts with DNTTIP2, and UIMC1. Interacts with KMT2D/MLL2. Interacts with ATAD2; the interaction is enhanced by estradiol. Interacts with KIF18A and LDB1. Interacts with RLIM (via its C-terminus). Interacts with MACROD1. Interacts with SH2D4A and PLCG. Interacts with SH2D4A; the interaction blocks binding to PLCG and inhibits estrogen-induced cell proliferation. Interacts with DYNLL1. Interacts with CCDC62; the interaction requires estradiol and appears to enhance the transcription of target genes. Interacts with NR2C1; the interaction prevents homodimerization of ESR1 and suppresses its transcriptional activity and cell growth. Interacts with DNAAF4. Interacts with PRMT2. Interacts with RBFOX2. Interacts with EP300; the interaction is estrogen-dependent and enhanced by CITED1. Interacts with CITED1; the interaction is estrogen-dependent. Interacts with FAM120B, FOXL2, PHB2 and SLC30A9. Interacts with coactivators NCOA3 and NCOA6. Interacts with STK3/MST2 only in the presence of SAV1 and vice-versa. Binds to CSNK1D. Interacts with NCOA2; NCOA2 can interact with ESR1 AF-1 and AF-2 domains simultaneously and mediate their transcriptional synergy. Interacts with DDX5. Interacts with NCOA1; the interaction seems to require a self-association of N-terminal and C-terminal regions. Interacts with ZNF366, DDX17, NFKB1, RELA, SP1 and SP3. Interacts with NRIP1. Interacts with GPER1; the interaction occurs in an estrogen-dependent manner. Interacts with CLOCK and the interaction is stimulated by estrogen. Interacts with TRIP4 (ufmylated); estrogen dependent. Interacts with LMTK3; the interaction phosphorylates ESR1 (in vitro) and protects it against proteasomal degradation. Interacts with CCAR2 (via N-terminus) in a ligand-independent manner. Interacts with ZFHX3. Interacts with SFR1 in a ligand-dependent and -independent manner. Interacts with DCAF13, LATS1 and DCAF1; regulates ESR1 ubiquitination and ubiquitin-mediated proteasomal degradation. Interacts (via DNA-binding domain) with POU4F2 (C-terminus); this interaction increases the estrogen receptor ESR1 transcriptional activity in a DNA- and ligand 17-beta-estradiol-independent manner. Interacts with ESRRB isoform 1. Interacts with UBE3A and WBP2. Interacts with GTF2B. Interacts with RBM39. In the absence of hormonal ligand, interacts with TACC1. Interacts with PI3KR1 or PI3KR2 and PTK2/FAK1. Interacts with SRC. Interacts with BAG1; the interaction is promoted in the absence of estradiol (17-beta-estradiol/E2). Interacts with and ubiquitinated by STUB1; the interaction is promoted in the absence of estradiol (17-beta-estradiol/E2). Interacts with NEDD8. In terms of processing, phosphorylated by cyclin A/CDK2 and CK1. Phosphorylation probably enhances transcriptional activity. Dephosphorylation at Ser-118 by PPP5C inhibits its transactivation activity. Phosphorylated by LMTK3 (in vitro). Ubiquitinated; regulated by LATS1 via DCAF1 it leads to ESR1 proteasomal degradation. Deubiquitinated by OTUB1. Ubiquitinated by STUB1/CHIP; in the CA1 hippocampal region following loss of endogenous circulating estradiol (17-beta-estradiol/E2). Ubiquitinated by UBR5, leading to its degradation: UBR5 specifically recognizes and binds ligand-bound ESR1 when it is not associated with coactivators (NCOAs). In presence of NCOAs, the UBR5-degron is not accessible, preventing its ubiquitination and degradation. Post-translationally, palmitoylated at Cys-447 by ZDHHC7 and ZDHHC21. Palmitoylation is required for plasma membrane targeting and for rapid intracellular signaling via ERK and AKT kinases and cAMP generation, but not for signaling mediated by the nuclear hormone receptor. In terms of processing, dimethylated by PRMT1 at Arg-260. The methylation may favor cytoplasmic localization. Demethylated by JMJD6 at Arg-260.

Its subcellular location is the nucleus. It localises to the cytoplasm. The protein resides in the golgi apparatus. It is found in the cell membrane. Functionally, nuclear hormone receptor. The steroid hormones and their receptors are involved in the regulation of eukaryotic gene expression and affect cellular proliferation and differentiation in target tissues. Ligand-dependent nuclear transactivation involves either direct homodimer binding to a palindromic estrogen response element (ERE) sequence or association with other DNA-binding transcription factors, such as AP-1/c-Jun, c-Fos, ATF-2, Sp1 and Sp3, to mediate ERE-independent signaling. Ligand binding induces a conformational change allowing subsequent or combinatorial association with multiprotein coactivator complexes through LXXLL motifs of their respective components. Mutual transrepression occurs between the estrogen receptor (ER) and NF-kappa-B in a cell-type specific manner. Decreases NF-kappa-B DNA-binding activity and inhibits NF-kappa-B-mediated transcription from the IL6 promoter and displace RELA/p65 and associated coregulators from the promoter. Recruited to the NF-kappa-B response element of the CCL2 and IL8 promoters and can displace CREBBP. Present with NF-kappa-B components RELA/p65 and NFKB1/p50 on ERE sequences. Can also act synergistically with NF-kappa-B to activate transcription involving respective recruitment adjacent response elements; the function involves CREBBP. Can activate the transcriptional activity of TFF1. Also mediates membrane-initiated estrogen signaling involving various kinase cascades. Essential for MTA1-mediated transcriptional regulation of BRCA1 and BCAS3. Maintains neuronal survival in response to ischemic reperfusion injury when in the presence of circulating estradiol (17-beta-estradiol/E2). In Sus scrofa (Pig), this protein is Estrogen receptor (ESR1).